A 97-amino-acid polypeptide reads, in one-letter code: MSIKLTPLEDKIIVKQAEAQTQTASGLYIPDNAKEKPQQGEVLAVGPGRRDDKGERIPMDVKVGDKVLYSKYGGTEVHYEGEDYLIVGARDILAILG.

Belongs to the GroES chaperonin family. As to quaternary structure, heptamer of 7 subunits arranged in a ring. Interacts with the chaperonin GroEL.

Its subcellular location is the cytoplasm. Functionally, together with the chaperonin GroEL, plays an essential role in assisting protein folding. The GroEL-GroES system forms a nano-cage that allows encapsulation of the non-native substrate proteins and provides a physical environment optimized to promote and accelerate protein folding. GroES binds to the apical surface of the GroEL ring, thereby capping the opening of the GroEL channel. The chain is Co-chaperonin GroES from Bifidobacterium longum (strain NCC 2705).